The primary structure comprises 446 residues: Nuclear distribution protein PAC1-1 (446 aa).

Positions 9–41 (QAEELHKSLIAYLSSINASQSVTTLREELQIGD) constitute a LisH domain. Residues 60-86 (ISVVRLQKRILDLESKIASLQAELDSA) adopt a coiled-coil conformation. WD repeat units lie at residues 112 to 153 (SHRG…RTLK), 155 to 195 (HTRT…ANIR), 199 to 239 (GHDH…CVKT), 242 to 281 (TQGDWVRDVFPSFDGKWLVSGGRDQAATIWEVSSGEARAS), 284 to 344 (GHEN…IKTL), 346 to 385 (GHNNWVRGLVFHPGGKYLFSVGDDKTIRCWDLSQEGKLVK), 390 to 430 (AHEH…TGFR), and 432 to 446 (VIATGSADSCVRVFM).

The protein belongs to the WD repeat LIS1/nudF family. Self-associates. Interacts with NDL1 and dynein.

The protein localises to the cytoplasm. It localises to the cytoskeleton. It is found in the spindle pole. Positively regulates the activity of the minus-end directed microtubule motor protein dynein. May enhance dynein-mediated microtubule sliding by targeting dynein to the microtubule plus end. Required for nuclear migration during vegetative growth as well as development. Required for retrograde early endosome (EE) transport from the hyphal tip. Required for localization of dynein to the mitotic spindle poles. Recruits additional proteins to the dynein complex at SPBs. The sequence is that of Nuclear distribution protein PAC1-1 from Uncinocarpus reesii (strain UAMH 1704).